A 288-amino-acid chain; its full sequence is ATP synthase gamma chain (288 aa).

This sequence belongs to the ATPase gamma chain family. As to quaternary structure, F-type ATPases have 2 components, CF(1) - the catalytic core - and CF(0) - the membrane proton channel. CF(1) has five subunits: alpha(3), beta(3), gamma(1), delta(1), epsilon(1). CF(0) has three main subunits: a, b and c.

The protein resides in the cell membrane. Functionally, produces ATP from ADP in the presence of a proton gradient across the membrane. The gamma chain is believed to be important in regulating ATPase activity and the flow of protons through the CF(0) complex. This is ATP synthase gamma chain from Staphylococcus epidermidis (strain ATCC 35984 / DSM 28319 / BCRC 17069 / CCUG 31568 / BM 3577 / RP62A).